A 161-amino-acid polypeptide reads, in one-letter code: Large ribosomal subunit protein uL15 (161 aa).

The segment at 1 to 44 is disordered; that stretch reads MKLSEIADNAGSRKKRMRVGRGIGSGKGKTAGRGGKGQTARSGV. Positions 21–37 are enriched in gly residues; the sequence is RGIGSGKGKTAGRGGKG.

The protein belongs to the universal ribosomal protein uL15 family. As to quaternary structure, part of the 50S ribosomal subunit.

Its function is as follows. Binds to the 23S rRNA. The chain is Large ribosomal subunit protein uL15 from Rhodopseudomonas palustris (strain BisA53).